The chain runs to 246 residues: Carboxy-S-adenosyl-L-methionine synthase (246 aa).

S-adenosyl-L-methionine contacts are provided by residues tyrosine 39, 64–66 (GCS), 89–90 (DN), 117–118 (DI), asparagine 132, and arginine 199.

It belongs to the class I-like SAM-binding methyltransferase superfamily. Cx-SAM synthase family. As to quaternary structure, homodimer.

It carries out the reaction prephenate + S-adenosyl-L-methionine = carboxy-S-adenosyl-L-methionine + 3-phenylpyruvate + H2O. Functionally, catalyzes the conversion of S-adenosyl-L-methionine (SAM) to carboxy-S-adenosyl-L-methionine (Cx-SAM). The protein is Carboxy-S-adenosyl-L-methionine synthase of Erwinia tasmaniensis (strain DSM 17950 / CFBP 7177 / CIP 109463 / NCPPB 4357 / Et1/99).